The chain runs to 369 residues: Protein V (369 aa).

2 disordered regions span residues 1–24 (MDQD…GRES) and 38–320 (SEPT…GHRR). Positions 7–20 (ISKEDSEVEREASG) are enriched in basic and acidic residues. The span at 50–61 (LHNTINTLQRPG) shows a compositional bias: polar residues. Composition is skewed to basic and acidic residues over residues 99–110 (AEAHARNVDKQN) and 150–168 (GAED…RGED). Residues S249, S257, and S260 each carry the phosphoserine; by host modification. Zn(2+) contacts are provided by H318, C337, C341, C353, C355, C358, C362, and C365.

It belongs to the paramyxoviruses V protein family. In terms of assembly, interacts with host IFIH1/MDA5 and DHX58/LGP2. Interacts with host IRF3. Interacts with host RIGI regulatory protein (via CARDs domain) and host TRIM25 (via SPRY domain); these interactions prevent TRIM25-mediated ubiquitination of RIG-I and disrupts downstream RIG-I signaling.

It localises to the host cytoplasm. In terms of biological role, plays an essential role in the inhibition of host immune response. Prevents the establishment of cellular antiviral state by blocking interferon-alpha/beta (IFN-alpha/beta) production and signaling pathway. Interacts with host IFIH1/MDA5 and DHX58/LGP2 to inhibit the transduction pathway involved in the activation of IFN-beta promoter, thus protecting the virus against cell antiviral state. Also interacts with and inhibits host IRF3. Blocks the type I interferon signaling pathway by disrupting the RIG-I signaling pathway. This is Protein V (P/V/C) from Sendai virus (strain Hamamatsu) (SeV).